A 503-amino-acid chain; its full sequence is E3 ubiquitin-protein ligase IE61 (503 aa).

The segment at 19–58 adopts an RING-type zinc-finger fold; sequence CAICMSAISGLGKTLPCLHDFCFVCIQTWTSTSAQCPLCR. Disordered stretches follow at residues 175-194, 367-418, and 445-503; these read AVIT…PSSR, SGPI…LFVD, and AALP…VRRK. Positions 375-388 are enriched in polar residues; that stretch reads GGSTSQDTSVSNIH. A compositionally biased stretch (low complexity) spans 389-403; sequence RSPPGGSSTQPSSGR. Positions 404 to 414 are enriched in basic residues; the sequence is RPGRPKGVKRR. Positions 471–480 are enriched in low complexity; sequence PSTSGSSPSP.

Interacts with host BTRC; this interaction seems to inactivate SCF-mediated protein degradation in general.

The enzyme catalyses S-ubiquitinyl-[E2 ubiquitin-conjugating enzyme]-L-cysteine + [acceptor protein]-L-lysine = [E2 ubiquitin-conjugating enzyme]-L-cysteine + N(6)-ubiquitinyl-[acceptor protein]-L-lysine.. Functionally, RING-finger E3 ubiquitin ligase that degrades host SP100, one of the major components of ND10 nuclear bodies, thereby disrupting the organization of these bodies. Also plays a role in the inhibition of host NF-kappa-B pathway by blocking the SCF(BTRC)-mediated addition of ubiquitin chains to host IkappaBalpha/NFKBIA, thereby interfering with its degradation. The chain is E3 ubiquitin-protein ligase IE61 from Cercopithecine herpesvirus 9 (strain DHV) (CeHV-9).